Reading from the N-terminus, the 564-residue chain is Excitatory amino acid transporter 4 (564 aa).

At 1–55 the chain is on the cytoplasmic side; it reads MSSHGNSLFLRESGQRLGRVGWLQRLQESLQQRALRTRLRLQTMTREHVLRFLRR. Ser-2 carries the phosphoserine modification. 3 helical membrane passes run 56-76, 99-119, and 133-153; these read NAFILLTVSAVVIGVSLAFAL, MLQMLVLPLIVSSLVTGMASL, and VYYMVTTVIAVFIGILMVTII. N-linked (GlcNAc...) asparagine glycans are attached at residues Asn-216, Asn-232, and Asn-239. 3 consecutive transmembrane segments (helical) span residues 262–285, 295–322, and 344–365; these read SANGINALGLVVFSVAFGLVIGGV, FFDSLNEAIMRMVGIIIWYAPVGILFLI, and LTVIVGLFLHAGGVLPLIYFLI. Positions 371 to 401 form an intramembrane region, discontinuously helical; the sequence is FPFIGGVLQALITAMGTSSSSATLPITFRCL. 388 to 390 lines the L-aspartate pocket; it reads SSS. Residues 411 to 437 form a helical membrane-spanning segment; it reads ITRFVLPVGATVNMDGTALYEALAAIF. Positions 419, 421, and 423 each coordinate Na(+). L-aspartate is bound by residues Thr-427, 468 to 472, Asp-501, and Asn-508; that span reads IPQAG. Residues 451-484 constitute an intramembrane region (discontinuously helical); sequence ITTISITATAASVGAAGIPQAGLVTMVIVLTSVG. The chain crosses the membrane as a helical span at residues 498–519; the sequence is WFLDRLRTMTNVLGDSIGAAVI. 2 residues coordinate Na(+): Asn-508 and Asp-512.

It belongs to the dicarboxylate/amino acid:cation symporter (DAACS) (TC 2.A.23) family. SLC1A6 subfamily. As to quaternary structure, homotrimer. Detected in brain, cerebellum and hippocampus.

It localises to the cell membrane. The enzyme catalyses K(+)(in) + L-glutamate(out) + 3 Na(+)(out) + H(+)(out) = K(+)(out) + L-glutamate(in) + 3 Na(+)(in) + H(+)(in). It carries out the reaction K(+)(in) + L-aspartate(out) + 3 Na(+)(out) + H(+)(out) = K(+)(out) + L-aspartate(in) + 3 Na(+)(in) + H(+)(in). The catalysed reaction is D-aspartate(out) + K(+)(in) + 3 Na(+)(out) + H(+)(out) = D-aspartate(in) + K(+)(out) + 3 Na(+)(in) + H(+)(in). Sodium-dependent, high-affinity amino acid transporter that mediates the uptake of L-glutamate and also L-aspartate and D-aspartate. Functions as a symporter that transports one amino acid molecule together with two or three Na(+) ions and one proton, in parallel with the counter-transport of one K(+) ion. Mediates Cl(-) flux that is not coupled to amino acid transport; this avoids the accumulation of negative charges due to aspartate and Na(+) symport. Plays a redundant role in the rapid removal of released glutamate from the synaptic cleft, which is essential for terminating the postsynaptic action of glutamate. This chain is Excitatory amino acid transporter 4 (SLC1A6), found in Canis lupus familiaris (Dog).